The following is a 454-amino-acid chain: UDP-N-acetylmuramoylalanine--D-glutamate ligase (454 aa).

119–125 is an ATP binding site; the sequence is GSNGKTT.

Belongs to the MurCDEF family.

Its subcellular location is the cytoplasm. It carries out the reaction UDP-N-acetyl-alpha-D-muramoyl-L-alanine + D-glutamate + ATP = UDP-N-acetyl-alpha-D-muramoyl-L-alanyl-D-glutamate + ADP + phosphate + H(+). It participates in cell wall biogenesis; peptidoglycan biosynthesis. In terms of biological role, cell wall formation. Catalyzes the addition of glutamate to the nucleotide precursor UDP-N-acetylmuramoyl-L-alanine (UMA). In Latilactobacillus sakei subsp. sakei (strain 23K) (Lactobacillus sakei subsp. sakei), this protein is UDP-N-acetylmuramoylalanine--D-glutamate ligase.